A 240-amino-acid chain; its full sequence is Cysteine-rich venom protein triflin (240 aa).

A signal peptide spans 1 to 19; that stretch reads MIAFIVLPILAAVLQQSSG. In terms of domain architecture, SCP spans 39 to 166; that stretch reads DLHNSLRRSV…KYSYFYVCQY (128 aa). 8 cysteine pairs are disulfide-bonded: C75/C153, C92/C167, C148/C164, C186/C193, C189/C198, C202/C235, C211/C229, and C220/C233. One can recognise a ShKT domain in the interval 202-235; the sequence is CTRENEFTNCDSLVQKSSCQDNYMKSKCPASCFC.

Belongs to the CRISP family. As to quaternary structure, forms a stable, non-covalent complex with SSP-2. In terms of tissue distribution, expressed by the venom gland.

Its subcellular location is the secreted. In terms of biological role, blocks contraction of smooth muscle elicited by high potassium-induced depolarization. May target voltage-gated calcium channels (Cav) on smooth muscle. The polypeptide is Cysteine-rich venom protein triflin (Protobothrops flavoviridis (Habu)).